Reading from the N-terminus, the 356-residue chain is DNA polymerase IV (356 aa).

One can recognise a UmuC domain in the interval 6-187 (IIHIDMDAFY…QPIRRLHGVG (182 aa)). Mg(2+) contacts are provided by D10 and D105. E106 is a catalytic residue.

It belongs to the DNA polymerase type-Y family. In terms of assembly, monomer. Requires Mg(2+) as cofactor.

It localises to the cytoplasm. The enzyme catalyses DNA(n) + a 2'-deoxyribonucleoside 5'-triphosphate = DNA(n+1) + diphosphate. In terms of biological role, poorly processive, error-prone DNA polymerase involved in untargeted mutagenesis. Copies undamaged DNA at stalled replication forks, which arise in vivo from mismatched or misaligned primer ends. These misaligned primers can be extended by PolIV. Exhibits no 3'-5' exonuclease (proofreading) activity. May be involved in translesional synthesis, in conjunction with the beta clamp from PolIII. This Halorhodospira halophila (strain DSM 244 / SL1) (Ectothiorhodospira halophila (strain DSM 244 / SL1)) protein is DNA polymerase IV.